The primary structure comprises 244 residues: MVNPVLVFDQVSLRYNGAPLLENINFTISPGEHICLLGKSGVGKTSLLNCITNTKTISKGTIYFNGIASNNKDYKQLKKQFSFLDQVPNLIDTDFVYDAIWREAKNNLKWWQRLFLVEPQSLREQIIQILEEVNLKEYVTYIIKDLSGGQKQRVEVAKLFFANSQVLLVDEPTTGLDLINAHKIMELIIQFARQKAMTLIFVTHDVEFALKYSDRIIALKNKALVLDQATNKLTKQKLMQIYHD.

In terms of domain architecture, ABC transporter spans 6-241 (LVFDQVSLRY…KLTKQKLMQI (236 aa)). ATP is bound at residue 38–45 (GKSGVGKT).

This sequence belongs to the ABC transporter superfamily.

Functionally, part of a high-affinity transport system. In Mycoplasma pneumoniae (strain ATCC 29342 / M129 / Subtype 1) (Mycoplasmoides pneumoniae), this protein is Probable ABC transporter ATP-binding protein p29 (p29).